Reading from the N-terminus, the 227-residue chain is Uracil-DNA glycosylase (227 aa).

Asp-65 functions as the Proton acceptor in the catalytic mechanism.

The protein belongs to the uracil-DNA glycosylase (UDG) superfamily. UNG family.

It is found in the cytoplasm. The enzyme catalyses Hydrolyzes single-stranded DNA or mismatched double-stranded DNA and polynucleotides, releasing free uracil.. Excises uracil residues from the DNA which can arise as a result of misincorporation of dUMP residues by DNA polymerase or due to deamination of cytosine. In Lactobacillus delbrueckii subsp. bulgaricus (strain ATCC BAA-365 / Lb-18), this protein is Uracil-DNA glycosylase.